Reading from the N-terminus, the 407-residue chain is Succinate--CoA ligase [ADP-forming] subunit beta, hydrogenosomal (407 aa).

A hydrogenosome-targeting transit peptide spans 1–9 (MLSSSFARN). Positions 18-261 (KEICAKYNVA…LKQVNPFEIR (244 aa)) constitute an ATP-grasp domain. ATP contacts are provided by residues lysine 55, 62–64 (GRG), and glutamate 124. Positions 216 and 230 each coordinate Mg(2+). Substrate is bound by residues asparagine 281 and 338–340 (GIV).

Belongs to the succinate/malate CoA ligase beta subunit family. Heterodimer of an alpha and a beta subunit. The cofactor is Mg(2+).

The protein localises to the hydrogenosome. The enzyme catalyses succinate + ATP + CoA = succinyl-CoA + ADP + phosphate. Its pathway is carbohydrate metabolism; tricarboxylic acid cycle; succinate from succinyl-CoA (ligase route): step 1/1. Functionally, succinyl-CoA synthetase functions in the citric acid cycle (TCA), coupling the hydrolysis of succinyl-CoA to the synthesis of ATP and thus represents the only step of substrate-level phosphorylation in the TCA. The beta subunit provides nucleotide specificity of the enzyme and binds the substrate succinate, while the binding sites for coenzyme A and phosphate are found in the alpha subunit. This is Succinate--CoA ligase [ADP-forming] subunit beta, hydrogenosomal from Trichomonas vaginalis.